Here is a 2072-residue protein sequence, read N- to C-terminus: Protein still life, isoform SIF type 1 (2072 aa).

The N-myristoyl glycine moiety is linked to residue Gly-2. The WH1 domain maps to 29–147 (RRDGHLLSSF…ECCSPSFKFS (119 aa)). Disordered regions lie at residues 153–188 (SYSL…EPQC), 245–284 (DNVA…NTNT), 327–355 (EGTQ…RNKD), 459–486 (NNTM…RGYP), 502–576 (EGSP…SPTS), 618–655 (AKSS…ELIR), and 699–747 (SGSS…YKSA). Positions 275-284 (VANSGVNTNT) are enriched in polar residues. Low complexity-rich tracts occupy residues 338–351 (SVGT…GTGT), 459–476 (NNTM…SGSR), and 522–553 (SSSN…PPQR). A compositionally biased stretch (polar residues) spans 564 to 576 (APNVTPTPGSPTS). A compositionally biased stretch (basic and acidic residues) spans 634–655 (IRDKERDRDRDGYYSDRNELIR). Over residues 732–743 (SLRQDSSLNDSG) the composition is skewed to polar residues. Positions 840–958 (TGAVRKAGFL…SIHSACAAAF (119 aa)) constitute a PH domain. A disordered region spans residues 1088-1119 (GRGATKRRPPMLSRSNSGSSRRSMQMNSRDEP). Residues 1100–1114 (SRSNSGSSRRSMQMN) show a composition bias toward low complexity. In terms of domain architecture, RBD spans 1121–1188 (KTFKVAMPDN…PHRNDLIENY (68 aa)). The PDZ domain occupies 1204–1293 (QVELQRTTLE…LSMMMRSSRT (90 aa)). The interval 1403–1424 (AEQETRKSSPTGSVTSSVSTTA) is disordered. Positions 1410–1424 (SSPTGSVTSSVSTTA) are enriched in low complexity. The DH domain occupies 1436 to 1630 (KLRKVVMELV…EKVAEHINEM (195 aa)). Disordered regions lie at residues 1803–1832 (MKNF…NSQT), 1844–2039 (HGSH…YQPV), and 2051–2072 (PRDM…DVKN). 2 stretches are compositionally biased toward low complexity: residues 1811-1821 (GSVSGHSSQGM) and 1926-1943 (QQQQ…QQGH). Over residues 1970-1984 (HSSDIERIDPGTKSE) the composition is skewed to basic and acidic residues. Over residues 2007–2022 (LTLSTTSTLSVGSTGS) the composition is skewed to low complexity. A compositionally biased stretch (polar residues) spans 2023–2032 (QARLIQSSHP).

Expressed in both larval and adult brains, mainly in a subset of neurons but not in glia. In the adult eye is expressed in the two primary pigment cells in the subapical region of the eye. Also present in photoreceptors.

Its subcellular location is the synapse. Functionally, regulates synaptic differentiation through the organization of actin cytoskeleton possibly by activating Rho-like GTPases. Is likely a factor in the cascade of Rac1 or Cdc42 in the neurons. May play a role in maintaining proper septate junction functions. Required for eye development and most likely affects corneal lens-formation. In Drosophila melanogaster (Fruit fly), this protein is Protein still life, isoform SIF type 1 (sif).